A 128-amino-acid chain; its full sequence is 3-aminoacrylate deaminase RutC (128 aa).

The protein belongs to the RutC family. As to quaternary structure, homotrimer.

It catalyses the reaction (Z)-3-aminoacrylate + H2O + H(+) = 3-oxopropanoate + NH4(+). Its function is as follows. Involved in pyrimidine catabolism. Catalyzes the deamination of 3-aminoacrylate to malonic semialdehyde, a reaction that can also occur spontaneously. RutC may facilitate the reaction and modulate the metabolic fitness, rather than catalyzing essential functions. This chain is 3-aminoacrylate deaminase RutC, found in Escherichia coli O157:H7.